The sequence spans 165 residues: V-type proton ATPase subunit c2 (165 aa).

At 1–12 (MASTFSGDETAP) the chain is on the lumenal side. Residues 13 to 33 (FFGFLGAAAALVFSCMGAAYG) form a helical membrane-spanning segment. Residues 34–55 (TAKSGVGVASMGVMRPELVMKS) lie on the Cytoplasmic side of the membrane. The helical transmembrane segment at 56–76 (IVPVVMAGVLGIYGLIIAVII) threads the bilayer. The Lumenal portion of the chain corresponds to 77-95 (STGINPKAKSYYLFDGYAH). The helical transmembrane segment at 96–117 (LSSGLACGLAGLSAGMAIGIVG) threads the bilayer. The Cytoplasmic segment spans residues 118 to 129 (DAGVRANAQQPK). Residues 130–155 (LFVGMILILIFAEALALYGLIVGIIL) traverse the membrane as a helical segment. Residues 156–165 (SSRAGQSRAE) lie on the Lumenal side of the membrane.

Belongs to the V-ATPase proteolipid subunit family. As to quaternary structure, V-ATPase is a heteromultimeric enzyme composed of a peripheral catalytic V1 complex (components A to H) attached to an integral membrane V0 proton pore complex (components: a, c, c'', d and e). The proteolipid components c and c'' are present as a hexameric ring that forms the proton-conducting pore. Expressed in leaf, root, flower and silique, with lower expression in roots.

Its subcellular location is the vacuole membrane. Proton-conducting pore forming subunit of the membrane integral V0 complex of vacuolar ATPase. V-ATPase is responsible for acidifying a variety of intracellular compartments in eukaryotic cells. The sequence is that of V-type proton ATPase subunit c2 (VHA-c2) from Arabidopsis thaliana (Mouse-ear cress).